We begin with the raw amino-acid sequence, 528 residues long: Succinate-semialdehyde dehydrogenase, mitochondrial (528 aa).

The N-terminal 34 residues, Met-1–Met-34, are a transit peptide targeting the mitochondrion. Thr-196–Trp-198 provides a ligand contact to NAD(+). Residue Arg-207 participates in substrate binding. NAD(+)-binding positions include Lys-222–Glu-225, Gly-275–Gly-280, and Glu-297. Glu-297 serves as the catalytic Proton acceptor. Substrate is bound at residue Arg-325. Catalysis depends on Cys-331, which acts as the Nucleophile. The cysteines at positions 331 and 333 are disulfide-linked. Position 428 to 430 (Glu-428 to Phe-430) interacts with NAD(+). A substrate-binding site is contributed by Ser-488.

The protein belongs to the aldehyde dehydrogenase family. In terms of assembly, homotetramer. Expressed in developing leaf tissues.

It localises to the mitochondrion matrix. The catalysed reaction is succinate semialdehyde + NAD(+) + H2O = succinate + NADH + 2 H(+). It functions in the pathway amino-acid degradation; 4-aminobutanoate degradation. Competitive inhibition by NADH. Inhibited by ATP, ADP and AMP. Redox-regulated. Inhibited under oxydizing conditions. Oxidizes specifically succinate semialdehyde. Involved in plant response to environmental stress by preventing the accumulation of reactive oxygen species, probably by regulating proline, gamma-hydroxybutyrate (GHB) and gamma-aminobutyrate (GABA) levels. Required for the maintenance of the shoot apical meristem (SAM) structure and subsequent adaxial-abaxial axis-dependent development of cotyledons and leaves. This is Succinate-semialdehyde dehydrogenase, mitochondrial from Arabidopsis thaliana (Mouse-ear cress).